A 357-amino-acid polypeptide reads, in one-letter code: Outer membrane protein YedS (357 aa).

The signal sequence occupies residues 1 to 21 (MKRKVLAMLVPALLVAGAANA).

This sequence belongs to the Gram-negative porin family.

The protein resides in the cell outer membrane. Its function is as follows. Forms pores that allow passive diffusion of small molecules across the outer membrane. Plays a role in resistance to carbapenems; this carbapenem-resistant, noncarbapenemase-producing clinical isolate has a deletion in ompF and a mutated marR gene that does not induce expression of this protein. However if this gene is overexpressed, or if wild-type marR is introduced, this leads to decreased resistance to the carbapenem antibiotics ertapenem, imipenem and meropenem. The protein is Outer membrane protein YedS of Escherichia coli.